Here is a 197-residue protein sequence, read N- to C-terminus: MEHYLSLFIKSVFIENMALSFFLGMCTFLAVSKKVSTAFGLGVAVIFVLGLSVPANQLVYSLLKDGAIVEGVDLTFLKFITFIGVIAALVQILEMFLDKFVPALYNALGIYLPLITVNCAIFGAVSFMAQREYDFGESVVYGFGAGLGWMLAIVALAGITEKMKYSDAPKGLKGLGITFIAAGLMAMAFMSFSGIQL.

6 helical membrane passes run 11-31 (SVFI…FLAV), 35-55 (VSTA…SVPA), 76-96 (FLKF…LEMF), 108-128 (LGIY…VSFM), 139-159 (VVYG…LAGI), and 175-195 (LGIT…FSGI).

It belongs to the NqrDE/RnfAE family. In terms of assembly, composed of six subunits; NqrA, NqrB, NqrC, NqrD, NqrE and NqrF.

The protein resides in the cell inner membrane. The enzyme catalyses a ubiquinone + n Na(+)(in) + NADH + H(+) = a ubiquinol + n Na(+)(out) + NAD(+). Its function is as follows. NQR complex catalyzes the reduction of ubiquinone-1 to ubiquinol by two successive reactions, coupled with the transport of Na(+) ions from the cytoplasm to the periplasm. NqrA to NqrE are probably involved in the second step, the conversion of ubisemiquinone to ubiquinol. The protein is Na(+)-translocating NADH-quinone reductase subunit E of Neisseria gonorrhoeae (strain ATCC 700825 / FA 1090).